A 1377-amino-acid polypeptide reads, in one-letter code: ATP-dependent helicase/nuclease subunit A (1377 aa).

In terms of domain architecture, UvrD-like helicase ATP-binding spans 4–478 (TSWTPGQQKV…IDLSKNFRSR (475 aa)). Residue 25-32 (AAAGSGKT) coordinates ATP. A UvrD-like helicase C-terminal domain is found at 526 to 867 (FLFSDTKTEL…RIMSIHKSKG (342 aa)). A compositionally biased stretch (acidic residues) spans 1036-1065 (FEEESDEQSDEERSDEERSDGEQSDGEQSD). The disordered stretch occupies residues 1036 to 1072 (FEEESDEQSDEERSDEERSDGEQSDGEQSDGEQPRKD).

Belongs to the helicase family. AddA subfamily. In terms of assembly, heterodimer of AddA and AddB/RexB. Mg(2+) serves as cofactor.

It carries out the reaction Couples ATP hydrolysis with the unwinding of duplex DNA by translocating in the 3'-5' direction.. It catalyses the reaction ATP + H2O = ADP + phosphate + H(+). In terms of biological role, the heterodimer acts as both an ATP-dependent DNA helicase and an ATP-dependent, dual-direction single-stranded exonuclease. Recognizes the chi site generating a DNA molecule suitable for the initiation of homologous recombination. The AddA nuclease domain is required for chi fragment generation; this subunit has the helicase and 3' -&gt; 5' nuclease activities. The polypeptide is ATP-dependent helicase/nuclease subunit A (Lachnoclostridium phytofermentans (strain ATCC 700394 / DSM 18823 / ISDg) (Clostridium phytofermentans)).